The primary structure comprises 767 residues: Bifunctional lysine-specific demethylase and histidyl-hydroxylase NO66 (767 aa).

Residues 21–324 (TVSQKQQREK…GRQEAHRQNS (304 aa)) form a disordered region. A Phosphoserine modification is found at Ser44. Acidic residues predominate over residues 46-71 (SDDDDEDDGEGEDDNDSNSDEDESGS). A compositionally biased stretch (low complexity) spans 72–81 (ESDATSADDS). A compositionally biased stretch (acidic residues) spans 82 to 98 (FSSDDNDDDDSGDEDGS). Composition is skewed to polar residues over residues 127-137 (YTINSENSSVE) and 177-199 (ESAT…TSKP). Ser214 carries the post-translational modification Phosphoserine. Polar residues predominate over residues 262–279 (PSSSGASCPLPSKTSKQV). A compositionally biased stretch (basic and acidic residues) spans 315–324 (GRQEAHRQNS). A JmjC domain is found at 420-565 (CSIRILNPST…NLLEKLMPMV (146 aa)). Positions 466, 468, and 531 each coordinate Fe cation.

The protein belongs to the ROX family. NO66 subfamily. The cofactor is Fe(2+).

It localises to the nucleus. It carries out the reaction N(6),N(6)-dimethyl-L-lysyl(36)-[histone H3] + 2 2-oxoglutarate + 2 O2 = L-lysyl(36)-[histone H3] + 2 formaldehyde + 2 succinate + 2 CO2. Its function is as follows. Oxygenase that can act as both a histone lysine demethylase and a ribosomal histidine hydroxylase. Specifically demethylates 'Lys-4' (H3K4me) and 'Lys-36' (H3K36me) of histone H3, thereby playing a central role in histone code. This chain is Bifunctional lysine-specific demethylase and histidyl-hydroxylase NO66, found in Drosophila willistoni (Fruit fly).